We begin with the raw amino-acid sequence, 70 residues long: Movement protein TGBp3 (70 aa).

Residues 1–4 are Lumenal-facing; sequence MFPR. The chain crosses the membrane as a helical span at residues 5-25; the sequence is SGLGLAVAAAVVAYLVLLLAQ. Over 26–70 the chain is Cytoplasmic; it reads QLYMSNSSQCTIVITGESVSVVGCVYSEAFIELVKGLKPYYHPLG.

This sequence belongs to the Tymovirales TGBp3 protein family.

The protein resides in the host endoplasmic reticulum membrane. Its function is as follows. Plays a role in viral cell-to-cell propagation, by facilitating genome transport to neighboring plant cells through plasmosdesmata. May induce the formation of granular vesicles derived from the Endoplasmic reticulum, which align on actin filaments. The chain is Movement protein TGBp3 from Crataegus (hawthorn).